An 842-amino-acid chain; its full sequence is Protein translocase subunit SecA (842 aa).

ATP contacts are provided by residues Q85, G103 to T107, and D493. Zn(2+) contacts are provided by C825, C827, C836, and H837.

It belongs to the SecA family. As to quaternary structure, monomer and homodimer. Part of the essential Sec protein translocation apparatus which comprises SecA, SecYEG and auxiliary proteins SecDF. Other proteins may also be involved. Zn(2+) serves as cofactor.

It localises to the cell membrane. Its subcellular location is the cytoplasm. The enzyme catalyses ATP + H2O + cellular proteinSide 1 = ADP + phosphate + cellular proteinSide 2.. Its function is as follows. Part of the Sec protein translocase complex. Interacts with the SecYEG preprotein conducting channel. Has a central role in coupling the hydrolysis of ATP to the transfer of proteins into and across the cell membrane, serving as an ATP-driven molecular motor driving the stepwise translocation of polypeptide chains across the membrane. This Streptococcus equi subsp. zooepidemicus (strain MGCS10565) protein is Protein translocase subunit SecA.